The chain runs to 371 residues: Anhydro-N-acetylmuramic acid kinase (371 aa).

An ATP-binding site is contributed by 12 to 19; it reads GTSADGID.

This sequence belongs to the anhydro-N-acetylmuramic acid kinase family.

It carries out the reaction 1,6-anhydro-N-acetyl-beta-muramate + ATP + H2O = N-acetyl-D-muramate 6-phosphate + ADP + H(+). Its pathway is amino-sugar metabolism; 1,6-anhydro-N-acetylmuramate degradation. It functions in the pathway cell wall biogenesis; peptidoglycan recycling. Its function is as follows. Catalyzes the specific phosphorylation of 1,6-anhydro-N-acetylmuramic acid (anhMurNAc) with the simultaneous cleavage of the 1,6-anhydro ring, generating MurNAc-6-P. Is required for the utilization of anhMurNAc either imported from the medium or derived from its own cell wall murein, and thus plays a role in cell wall recycling. This Saccharophagus degradans (strain 2-40 / ATCC 43961 / DSM 17024) protein is Anhydro-N-acetylmuramic acid kinase.